A 309-amino-acid chain; its full sequence is Malate dehydrogenase (309 aa).

NAD(+)-binding positions include 10–15 (GAGNVG) and aspartate 34. The substrate site is built by arginine 83 and arginine 89. NAD(+)-binding positions include asparagine 96 and 119-121 (VSN). Substrate-binding residues include asparagine 121 and arginine 152. Histidine 176 serves as the catalytic Proton acceptor.

This sequence belongs to the LDH/MDH superfamily. MDH type 3 family.

It carries out the reaction (S)-malate + NAD(+) = oxaloacetate + NADH + H(+). Its function is as follows. Catalyzes the reversible oxidation of malate to oxaloacetate. This is Malate dehydrogenase from Heliobacterium modesticaldum (strain ATCC 51547 / Ice1).